A 940-amino-acid chain; its full sequence is Isoleucine--tRNA ligase (940 aa).

A 'HIGH' region motif is present at residues 58 to 68; sequence PYANGSIHIGH. Glu564 contacts L-isoleucyl-5'-AMP. A 'KMSKS' region motif is present at residues 605 to 609; that stretch reads KMSKS. Lys608 contacts ATP. Positions 903, 906, 923, and 926 each coordinate Zn(2+).

Belongs to the class-I aminoacyl-tRNA synthetase family. IleS type 1 subfamily. In terms of assembly, monomer. Zn(2+) serves as cofactor.

The protein resides in the cytoplasm. It catalyses the reaction tRNA(Ile) + L-isoleucine + ATP = L-isoleucyl-tRNA(Ile) + AMP + diphosphate. Functionally, catalyzes the attachment of isoleucine to tRNA(Ile). As IleRS can inadvertently accommodate and process structurally similar amino acids such as valine, to avoid such errors it has two additional distinct tRNA(Ile)-dependent editing activities. One activity is designated as 'pretransfer' editing and involves the hydrolysis of activated Val-AMP. The other activity is designated 'posttransfer' editing and involves deacylation of mischarged Val-tRNA(Ile). This is Isoleucine--tRNA ligase from Shewanella baltica (strain OS195).